Here is a 274-residue protein sequence, read N- to C-terminus: Probable S-adenosylmethionine-dependent methyltransferase MT3114 (274 aa).

Residues 1 to 24 (MCAFVPHVPRHSRGDNPPSASTAS) form a disordered region.

This sequence belongs to the methyltransferase superfamily.

Its function is as follows. Probable S-adenosylmethionine-dependent methyltransferase required for the 6-O-methylation of the polysaccharide backbone of 6-O-methylglucosyl lipopolysaccharides (MGLP). The protein is Probable S-adenosylmethionine-dependent methyltransferase MT3114 of Mycobacterium tuberculosis (strain CDC 1551 / Oshkosh).